Consider the following 357-residue polypeptide: Protein XRP2 (357 aa).

Residues 1-11 (MGCFFSKRRKP) show a composition bias toward basic residues. A disordered region spans residues 1–39 (MGCFFSKRRKPAQGGQQQGASQEPAAGEEKAPQYSWDQR). The N-myristoyl glycine moiety is linked to residue glycine 2. Cysteine 3 carries S-palmitoyl cysteine lipidation. Residues 12–25 (AQGGQQQGASQEPA) show a composition bias toward low complexity. The region spanning 32-186 (PQYSWDQRAK…TWSNIHDFTP (155 aa)) is the C-CAP/cofactor C-like domain. GTP-binding positions include 105 to 106 (GS) and 122 to 125 (QQFR).

The protein belongs to the TBCC family. In terms of processing, myristoylated on Gly-2; which may be required for membrane targeting. Post-translationally, palmitoylated on Cys-3; which may be required for plasma membrane targeting.

The protein localises to the cell membrane. In terms of biological role, acts as a GTPase-activating protein (GAP) for tubulin in concert with tubulin-specific chaperone C, but does not enhance tubulin heterodimerization. Acts as a GTPase-activating protein. May act as guanine nucleotide dissociation inhibitor towards ADP-ribosylation factor-like proteins. The sequence is that of Protein XRP2 (RP2) from Gallus gallus (Chicken).